Here is a 338-residue protein sequence, read N- to C-terminus: UDP-3-O-acylglucosamine N-acyltransferase (338 aa).

Residue His251 is the Proton acceptor of the active site.

This sequence belongs to the transferase hexapeptide repeat family. LpxD subfamily. In terms of assembly, homotrimer.

The catalysed reaction is a UDP-3-O-[(3R)-3-hydroxyacyl]-alpha-D-glucosamine + a (3R)-hydroxyacyl-[ACP] = a UDP-2-N,3-O-bis[(3R)-3-hydroxyacyl]-alpha-D-glucosamine + holo-[ACP] + H(+). Its pathway is bacterial outer membrane biogenesis; LPS lipid A biosynthesis. Its function is as follows. Catalyzes the N-acylation of UDP-3-O-acylglucosamine using 3-hydroxyacyl-ACP as the acyl donor. Is involved in the biosynthesis of lipid A, a phosphorylated glycolipid that anchors the lipopolysaccharide to the outer membrane of the cell. The chain is UDP-3-O-acylglucosamine N-acyltransferase from Psychrobacter arcticus (strain DSM 17307 / VKM B-2377 / 273-4).